The primary structure comprises 432 residues: Protein distal antenna-related (432 aa).

In terms of domain architecture, HTH psq-type spans 15–66; it reads TRGKRPLRNLTPNDKVRAIQRIHNGETKASVSRDLGVPESTLRGWCKNEQKL. Positions 42-62 form a DNA-binding region, H-T-H motif; it reads KASVSRDLGVPESTLRGWCKN. Disordered stretches follow at residues 195-221 and 401-432; these read ESADTDIKSPQSTTDITDTAREENSTK and SCASVSSRNNSRSQTPDKSTATSIACLSDGEQ. Polar residues-rich tracts occupy residues 202 to 211 and 401 to 425; these read KSPQSTTDIT and SCASVSSRNNSRSQTPDKSTATSIA.

Interacts with itself, dan, ey and dac to form a complex (or complexes) containing the RD factors.

Its subcellular location is the nucleus. Probable transcription factor with a role in the retinal determination (RD) network. Regulates ato expression and is required for normal R8 induction and differentiation. Danr appears to repress Dan expression, but Dan is required for Danr expression anterior to the morphogenetic furrow (MF). Dan and Danr lie downstream of so and require dac function for highest levels of expression. Contributes to differentiation of antenna-specific characteristics; effector gene that acts downstream of homothorax (hth), Distal-less (Dll), cut (ct) and spineless (ss) genes to control differentiation of distal antennal structures. The polypeptide is Protein distal antenna-related (Drosophila pseudoobscura pseudoobscura (Fruit fly)).